Consider the following 152-residue polypeptide: UPF0756 membrane protein EF_1246 (152 aa).

4 helical membrane passes run 4 to 24, 52 to 72, 85 to 105, and 115 to 135; these read WLFLLLIALIAFVAKNQSLLI, LGVTIISITILVPIATGQIGL, WLGILCGILVAVLSSKGVGLI, and LVFGTILGVVFLKGIAAGPII.

This sequence belongs to the UPF0756 family.

The protein localises to the cell membrane. The protein is UPF0756 membrane protein EF_1246 of Enterococcus faecalis (strain ATCC 700802 / V583).